The primary structure comprises 168 residues: MVIMGRVAGPYAVAGWIKVFPYTEYVDGLLDYPDWWLGSEGGKWHKFKVIEGEVHGSVLLASLEQCADRDAAARLKGLKIAIPRRLLPALPESGEEGYYWSDLIGLAVINLQGEVLGKVAGLLETGANDVLQVQNPEETERLIPFIDQVIIKVDLAAGRITVDWGLDY.

Residues 95 to 168 (EEGYYWSDLI…RITVDWGLDY (74 aa)) form the PRC barrel domain.

It belongs to the RimM family. In terms of assembly, binds ribosomal protein uS19.

Its subcellular location is the cytoplasm. An accessory protein needed during the final step in the assembly of 30S ribosomal subunit, possibly for assembly of the head region. Essential for efficient processing of 16S rRNA. May be needed both before and after RbfA during the maturation of 16S rRNA. It has affinity for free ribosomal 30S subunits but not for 70S ribosomes. The polypeptide is Ribosome maturation factor RimM (Nitrosospira multiformis (strain ATCC 25196 / NCIMB 11849 / C 71)).